We begin with the raw amino-acid sequence, 203 residues long: Histidine biosynthesis bifunctional protein HisIE (203 aa).

The phosphoribosyl-AMP cyclohydrolase stretch occupies residues 1–114 (MLTEQQRREL…FGDTAHQWLF (114 aa)). Residues 115–203 (LYQLEQLLAE…VIENLRKRHQ (89 aa)) form a phosphoribosyl-ATP pyrophosphohydrolase region.

This sequence in the N-terminal section; belongs to the PRA-CH family. It in the C-terminal section; belongs to the PRA-PH family.

The protein localises to the cytoplasm. It carries out the reaction 1-(5-phospho-beta-D-ribosyl)-ATP + H2O = 1-(5-phospho-beta-D-ribosyl)-5'-AMP + diphosphate + H(+). The catalysed reaction is 1-(5-phospho-beta-D-ribosyl)-5'-AMP + H2O = 1-(5-phospho-beta-D-ribosyl)-5-[(5-phospho-beta-D-ribosylamino)methylideneamino]imidazole-4-carboxamide. Its pathway is amino-acid biosynthesis; L-histidine biosynthesis; L-histidine from 5-phospho-alpha-D-ribose 1-diphosphate: step 2/9. It functions in the pathway amino-acid biosynthesis; L-histidine biosynthesis; L-histidine from 5-phospho-alpha-D-ribose 1-diphosphate: step 3/9. In Escherichia coli O6:H1 (strain CFT073 / ATCC 700928 / UPEC), this protein is Histidine biosynthesis bifunctional protein HisIE.